The sequence spans 376 residues: Alcohol dehydrogenase class-3 (376 aa).

Residues Cys40, His62, Cys92, Cys95, Cys98, Cys106, and Cys170 each contribute to the Zn(2+) site.

The protein belongs to the zinc-containing alcohol dehydrogenase family. Class-III subfamily. As to quaternary structure, homodimer. It depends on Zn(2+) as a cofactor.

The protein localises to the cytoplasm. The catalysed reaction is a primary alcohol + NAD(+) = an aldehyde + NADH + H(+). The enzyme catalyses a secondary alcohol + NAD(+) = a ketone + NADH + H(+). It carries out the reaction S-(hydroxymethyl)glutathione + NADP(+) = S-formylglutathione + NADPH + H(+). It catalyses the reaction S-(hydroxymethyl)glutathione + NAD(+) = S-formylglutathione + NADH + H(+). Functionally, oxidizes long-chain aliphatic alcohols, long-chain hydroxylated fatty acids and S-hydroxymethylglutathione (hmGSH) in increasing order of preference. Shows little or no activity with short-chain aliphatic alcohols. The protein is Alcohol dehydrogenase class-3 (adhI) of Cereibacter sphaeroides (strain ATCC 17023 / DSM 158 / JCM 6121 / CCUG 31486 / LMG 2827 / NBRC 12203 / NCIMB 8253 / ATH 2.4.1.) (Rhodobacter sphaeroides).